The sequence spans 368 residues: Phosphate acyltransferase (368 aa).

Residues 337 to 368 (LEQAARDASGAGQASPIAGQPAEPYAAQSSKA) form a disordered region.

This sequence belongs to the PlsX family. As to quaternary structure, homodimer. Probably interacts with PlsY.

The protein resides in the cytoplasm. The catalysed reaction is a fatty acyl-[ACP] + phosphate = an acyl phosphate + holo-[ACP]. Its pathway is lipid metabolism; phospholipid metabolism. Functionally, catalyzes the reversible formation of acyl-phosphate (acyl-PO(4)) from acyl-[acyl-carrier-protein] (acyl-ACP). This enzyme utilizes acyl-ACP as fatty acyl donor, but not acyl-CoA. This is Phosphate acyltransferase from Paraburkholderia phytofirmans (strain DSM 17436 / LMG 22146 / PsJN) (Burkholderia phytofirmans).